The sequence spans 227 residues: Fibrillarin-like rRNA/tRNA 2'-O-methyltransferase (227 aa).

Residues 86 to 87 (TT), 105 to 106 (EF), 130 to 131 (DA), and 150 to 153 (DVAQ) each bind S-adenosyl-L-methionine.

The protein belongs to the methyltransferase superfamily. Fibrillarin family. In terms of assembly, interacts with nop5. Component of box C/D small ribonucleoprotein (sRNP) particles that contain rpl7ae, FlpA and nop5, plus a guide RNA.

Involved in pre-rRNA and tRNA processing. Utilizes the methyl donor S-adenosyl-L-methionine to catalyze the site-specific 2'-hydroxyl methylation of ribose moieties in rRNA and tRNA. Site specificity is provided by a guide RNA that base pairs with the substrate. Methylation occurs at a characteristic distance from the sequence involved in base pairing with the guide RNA. In Pyrococcus horikoshii (strain ATCC 700860 / DSM 12428 / JCM 9974 / NBRC 100139 / OT-3), this protein is Fibrillarin-like rRNA/tRNA 2'-O-methyltransferase.